The sequence spans 73 residues: Large ribosomal subunit protein bL31 (73 aa).

The protein belongs to the bacterial ribosomal protein bL31 family. Type A subfamily. In terms of assembly, part of the 50S ribosomal subunit.

Functionally, binds the 23S rRNA. The polypeptide is Large ribosomal subunit protein bL31 (Rhodospirillum centenum (strain ATCC 51521 / SW)).